Consider the following 33-residue polypeptide: Cytochrome b6-f complex subunit 8 (33 aa).

A helical membrane pass occupies residues 2–22; it reads IFTLGWASLAAIFTFSIAMVV.

Belongs to the PetN family. As to quaternary structure, the 4 large subunits of the cytochrome b6-f complex are cytochrome b6, subunit IV (17 kDa polypeptide, PetD), cytochrome f and the Rieske protein, while the 4 small subunits are PetG, PetL, PetM and PetN. The complex functions as a dimer.

The protein resides in the cellular thylakoid membrane. Functionally, component of the cytochrome b6-f complex, which mediates electron transfer between photosystem II (PSII) and photosystem I (PSI), cyclic electron flow around PSI, and state transitions. This chain is Cytochrome b6-f complex subunit 8, found in Prochlorococcus marinus (strain NATL2A).